A 349-amino-acid polypeptide reads, in one-letter code: Ribosomal RNA large subunit methyltransferase M (349 aa).

S-adenosyl-L-methionine-binding positions include 216-219 (APGG), Asp235, Asp255, and Asp271. The active-site Proton acceptor is the Lys300.

The protein belongs to the class I-like SAM-binding methyltransferase superfamily. RNA methyltransferase RlmE family. RlmM subfamily. Monomer.

It localises to the cytoplasm. It carries out the reaction cytidine(2498) in 23S rRNA + S-adenosyl-L-methionine = 2'-O-methylcytidine(2498) in 23S rRNA + S-adenosyl-L-homocysteine + H(+). Catalyzes the 2'-O-methylation at nucleotide C2498 in 23S rRNA. The sequence is that of Ribosomal RNA large subunit methyltransferase M from Saccharophagus degradans (strain 2-40 / ATCC 43961 / DSM 17024).